A 1024-amino-acid chain; its full sequence is Probable alpha-mannosidase At5g13980 (1024 aa).

The signal sequence occupies residues 1 to 21 (MDLAKFLCWIVLLLGISLVES). Asparagine 27 is a glycosylation site (N-linked (GlcNAc...) asparagine). Residues histidine 46 and aspartate 48 each coordinate Zn(2+). N-linked (GlcNAc...) asparagine glycosylation occurs at asparagine 63. Aspartate 168 contacts Zn(2+). Residue asparagine 278 is glycosylated (N-linked (GlcNAc...) asparagine). A Zn(2+)-binding site is contributed by histidine 410. Residues cysteine 461 and cysteine 469 are joined by a disulfide bond. Asparagine 465, asparagine 475, asparagine 637, asparagine 658, asparagine 733, and asparagine 823 each carry an N-linked (GlcNAc...) asparagine glycan. Residues cysteine 827 and cysteine 832 are joined by a disulfide bond.

Belongs to the glycosyl hydrolase 38 family. As to quaternary structure, homodimer. Zn(2+) is required as a cofactor.

The enzyme catalyses Hydrolysis of terminal, non-reducing alpha-D-mannose residues in alpha-D-mannosides.. Its function is as follows. Liberates mannose from p-nitrophenyl-alpha-D-mannoside in vitro. The chain is Probable alpha-mannosidase At5g13980 from Arabidopsis thaliana (Mouse-ear cress).